Reading from the N-terminus, the 208-residue chain is Small ribosomal subunit protein uS4 (208 aa).

Residues glutamine 98–isoleucine 161 enclose the S4 RNA-binding domain.

The protein belongs to the universal ribosomal protein uS4 family. In terms of assembly, part of the 30S ribosomal subunit. Contacts protein S5. The interaction surface between S4 and S5 is involved in control of translational fidelity.

One of the primary rRNA binding proteins, it binds directly to 16S rRNA where it nucleates assembly of the body of the 30S subunit. Functionally, with S5 and S12 plays an important role in translational accuracy. This Campylobacter concisus (strain 13826) protein is Small ribosomal subunit protein uS4.